The following is a 418-amino-acid chain: Gamma-glutamyl phosphate reductase (418 aa).

It belongs to the gamma-glutamyl phosphate reductase family.

The protein localises to the cytoplasm. The catalysed reaction is L-glutamate 5-semialdehyde + phosphate + NADP(+) = L-glutamyl 5-phosphate + NADPH + H(+). It participates in amino-acid biosynthesis; L-proline biosynthesis; L-glutamate 5-semialdehyde from L-glutamate: step 2/2. Catalyzes the NADPH-dependent reduction of L-glutamate 5-phosphate into L-glutamate 5-semialdehyde and phosphate. The product spontaneously undergoes cyclization to form 1-pyrroline-5-carboxylate. In Photobacterium profundum (strain SS9), this protein is Gamma-glutamyl phosphate reductase.